The chain runs to 308 residues: D-2-hydroxyacid dehydrogenase (308 aa).

NAD(+) contacts are provided by residues 145 to 146 (TL), 224 to 226 (VAR), and Asp-250. Arg-226 is a catalytic residue. Residue Glu-255 is part of the active site. Residue His-274 is the Proton donor of the active site. 274–277 (HVSA) is a binding site for NAD(+).

It belongs to the D-isomer specific 2-hydroxyacid dehydrogenase family. In terms of assembly, homotetramer.

Catalyzes the stereospecific NAD(P)H-dependent reduction of 2-ketocarboxylic acids into the corresponding D-2-hydroxycarboxylic acids. Can use both NADPH or NADH as reductant, displaying a marked preference for NADPH over NADH. Shows a broad substrate specificity, although it displays a marked preference for the 2-ketocarboxylic acids having an unbranched chain of 4-5 carbon atoms. This Haloferax mediterranei (strain ATCC 33500 / DSM 1411 / JCM 8866 / NBRC 14739 / NCIMB 2177 / R-4) (Halobacterium mediterranei) protein is D-2-hydroxyacid dehydrogenase (ddh).